A 345-amino-acid polypeptide reads, in one-letter code: Ubiquinone biosynthesis O-methyltransferase, mitochondrial (345 aa).

A mitochondrion-targeting transit peptide spans 1 to 86 (MWRGGRLSSR…TYRSSWKKLY (86 aa)). Arg124 contacts S-adenosyl-L-methionine. N6-acetyllysine is present on residues Lys143 and Lys149. S-adenosyl-L-methionine contacts are provided by Gly154 and Asp175. Position 196 is an N6-acetyllysine (Lys196). Ser222 lines the S-adenosyl-L-methionine pocket. Mg(2+)-binding residues include Glu223, Glu226, and His227.

It belongs to the class I-like SAM-binding methyltransferase superfamily. UbiG/COQ3 family. As to quaternary structure, component of a multi-subunit COQ enzyme complex, composed of at least COQ3, COQ4, COQ5, COQ6, COQ7 and COQ9. It depends on Mg(2+) as a cofactor.

Its subcellular location is the mitochondrion inner membrane. It catalyses the reaction 3,4-dihydroxy-5-(all-trans-decaprenyl)benzoate + S-adenosyl-L-methionine = 4-hydroxy-3-methoxy-5-(all-trans-decaprenyl)benzoate + S-adenosyl-L-homocysteine + H(+). The enzyme catalyses a 3-demethylubiquinone + S-adenosyl-L-methionine = a ubiquinone + S-adenosyl-L-homocysteine. The catalysed reaction is 3-demethylubiquinol-10 + S-adenosyl-L-methionine = ubiquinol-10 + S-adenosyl-L-homocysteine + H(+). Its pathway is cofactor biosynthesis; ubiquinone biosynthesis. Functionally, O-methyltransferase required for two non-consecutive steps during ubiquinone biosynthesis. Catalyzes the 2 O-methylation of 3,4-dihydroxy-5-(all-trans-decaprenyl)benzoic acid into 4-hydroxy-3-methoxy-5-(all-trans-decaprenyl)benzoic acid. Also catalyzes the last step of ubiquinone biosynthesis by mediating methylation of 3-demethylubiquinone into ubiquinone. Also able to mediate the methylation of 3-demethylubiquinol-10 into ubiquinol-10. The protein is Ubiquinone biosynthesis O-methyltransferase, mitochondrial of Rattus norvegicus (Rat).